Here is a 305-residue protein sequence, read N- to C-terminus: MRLQTIAPAKVNLVLRVGPPRRDGYHGIRSLMVPLDLGDRVDVSVGERAGPVTCRVPGRPELDGADNLAARAAERFRARFGVERTIGIRIAKRIPVTAGLGGGSSDAAAVLRCLARAFGIRDRAALAAIALEVGSDVPFFLGPGPAWAEGRGERLTPADVPPQHLVLVYPDDPALAIRAGEAYRWLDASRQGRRPRLPPRFARFEPSRAGNDLQPPCLLERPPLATLLGLLVGRGATAAIMSGSGPTVFGTFHSRNAAARAARTIAEEVVDRKVMVLAATTVRRHPGVTPWRSPRSASSPSTKRS.

The active site involves Lys10. ATP is bound at residue 95-105 (PVTAGLGGGSS). Residue Asp136 is part of the active site. The tract at residues 286-305 (PGVTPWRSPRSASSPSTKRS) is disordered. Positions 290 to 305 (PWRSPRSASSPSTKRS) are enriched in low complexity.

Belongs to the GHMP kinase family. IspE subfamily.

It catalyses the reaction 4-CDP-2-C-methyl-D-erythritol + ATP = 4-CDP-2-C-methyl-D-erythritol 2-phosphate + ADP + H(+). It participates in isoprenoid biosynthesis; isopentenyl diphosphate biosynthesis via DXP pathway; isopentenyl diphosphate from 1-deoxy-D-xylulose 5-phosphate: step 3/6. Catalyzes the phosphorylation of the position 2 hydroxy group of 4-diphosphocytidyl-2C-methyl-D-erythritol. In Anaeromyxobacter sp. (strain Fw109-5), this protein is 4-diphosphocytidyl-2-C-methyl-D-erythritol kinase.